Reading from the N-terminus, the 561-residue chain is Putative transport protein YbjL (561 aa).

The next 5 membrane-spanning stretches (helical) occupy residues 8–28 (LLNGNYILLLFVVLTLGLCLG), 32–52 (LGSIQLGNSIGVLVVSLLLGQ), 66–86 (FMLFIFCVGVEAGPNFFSIFF), 94–114 (MLALVMVGSALVIALGLGKLF), and 158–178 (NLSLGYALTYLIGLVSLIVGA). RCK C-terminal domains lie at 200–288 (RGLD…SFRN) and 292–373 (VFDR…RIGF). 5 helical membrane passes run 383 to 403 (LLAFCAFFVIGLMIGMITFQF), 406 to 426 (FSFGMGNAAGLLFAGIMLGFM), 451 to 471 (VFMAGVGLSAGSGINNGLGAI), 475 to 495 (MLIAGLIVSLVPVVICFLFGA), and 540 to 560 (AIANVLLTLAGTIIVMVWPGL).

The protein belongs to the AAE transporter (TC 2.A.81) family. YbjL subfamily.

It is found in the cell membrane. The polypeptide is Putative transport protein YbjL (Shigella sonnei (strain Ss046)).